The primary structure comprises 402 residues: B3 domain-containing protein Os01g0723500 (402 aa).

Positions 18-121 form a DNA-binding region, TF-B3 1; it reads RPHFFKVLVG…RFTAMVFDRT (104 aa). Positions 126 to 203 are disordered; that stretch reads EDLMGGGGGD…VKNEEDADEL (78 aa). Basic and acidic residues predominate over residues 152-162; it reads DAARPKKDSVG. Over residues 173-186 the composition is skewed to polar residues; the sequence is SGGQPLQIVDSSWT. A DNA-binding region (TF-B3 2) is located at residues 289 to 381; that stretch reads CVIRMSTMHV…EFRVHIFRVV (93 aa).

It is found in the nucleus. This chain is B3 domain-containing protein Os01g0723500, found in Oryza sativa subsp. japonica (Rice).